A 1819-amino-acid chain; its full sequence is Non-reducing polyketide synthase 8 (1819 aa).

In terms of domain architecture, Starter acyltransferase (SAT) spans 38–265 (QLTLLSKQKQ…QKIINLPVYG (228 aa)). Residues 405–840 (KSSIAIVGMS…GGNTMIAIEE (436 aa)) form the Ketosynthase family 3 (KS3) domain. Catalysis depends on for beta-ketoacyl synthase activity residues C578, H714, and H758. The Malonyl-CoA:ACP transacylase (MAT) domain occupies 943–1262 (FAFTGQGASY…SLSTLHCAGA (320 aa)). Residues 1336–1476 (QRIIEESFDG…GDRSAWLSSW (141 aa)) are N-terminal hotdog fold. A PKS/mFAS DH domain is found at 1336 to 1646 (QRIIEESFDG…FRQYPRILLN (311 aa)). H1368 serves as the catalytic Proton acceptor; for dehydratase activity. The segment at 1404 to 1642 (AMNVADLEVV…GGIKFRQYPR (239 aa)) is dehydratase (DH) domain. A C-terminal hotdog fold region spans residues 1498 to 1646 (IANRLSHNMA…FRQYPRILLN (149 aa)). D1557 serves as the catalytic Proton donor; for dehydratase activity. The Carrier domain maps to 1741–1818 (VDTNSVASKA…DLRSWLMEYY (78 aa)). S1778 carries the O-(pantetheine 4'-phosphoryl)serine modification.

Pantetheine 4'-phosphate is required as a cofactor.

It participates in secondary metabolite biosynthesis. Non-reducing polyketide synthase; part of the gene cluster that mediates the biosynthesis of dibenzodioxocinones such as pestalotiollide B, a novel class of inhibitors against cholesterol ester transfer protein (CEPT). The biosynthesis initiates from condensation of acetate and malonate units catalyzed by the non-reducing PKS pks8/GME11356. Pks8/GME11356 lacks a thioesterase (TE) domain, which is important to the cyclizing of the third ring of atrochrysone carboxylic acid, and the esterase GME11355 might play the role of TE and catalyzes the cyclization reaction of the C ring. The lactamase-like protein GME11357 (or other beta-lactamases in Pestalotiopsis microspora) probably hydrolyzes the thioester bond between the ACP of pks8/GME11356 and the intermediate to release atrochrysone carboxylic acid, which is spontaneously dehydrates to form endocrocin anthrone. Endocrocin anthrone is further converted to emodin via the endocrocin intermediate. Emodin is then oxidized by several enzymes such as the Baeyer-Villiger oxidase GME11358, the oxidoreductase GME11367, the short chain dehydrogenase/reductase GME11373, as well as by other oxidoreductases from the cluster, to modify the A and C rings and open the B ring, and finally yield monodictyphenone. The prenyltransferase GME11375 may catalyze the addition reaction between the C5 side chains and the carbon bone of dibenzodioxocinones. The remaining biochemical reactions to the final product dibenzodioxocinones should be methylation catalyzed by methyltransferase GME11366 and reduction and lactonization reaction catalyzed by a series of oxidordeuctases. The polypeptide is Non-reducing polyketide synthase 8 (Pestalotiopsis microspora).